A 308-amino-acid polypeptide reads, in one-letter code: Elongation factor Ts (308 aa).

The involved in Mg(2+) ion dislocation from EF-Tu stretch occupies residues 80–83 (TDFV).

The protein belongs to the EF-Ts family.

Its subcellular location is the cytoplasm. Associates with the EF-Tu.GDP complex and induces the exchange of GDP to GTP. It remains bound to the aminoacyl-tRNA.EF-Tu.GTP complex up to the GTP hydrolysis stage on the ribosome. The polypeptide is Elongation factor Ts (Rhodopseudomonas palustris (strain BisB5)).